The sequence spans 213 residues: Methylthioribulose-1-phosphate dehydratase (213 aa).

Positions 104 and 106 each coordinate Zn(2+).

The protein belongs to the aldolase class II family. MtnB subfamily. Zn(2+) is required as a cofactor.

It carries out the reaction 5-(methylsulfanyl)-D-ribulose 1-phosphate = 5-methylsulfanyl-2,3-dioxopentyl phosphate + H2O. It functions in the pathway amino-acid biosynthesis; L-methionine biosynthesis via salvage pathway; L-methionine from S-methyl-5-thio-alpha-D-ribose 1-phosphate: step 2/6. Functionally, catalyzes the dehydration of methylthioribulose-1-phosphate (MTRu-1-P) into 2,3-diketo-5-methylthiopentyl-1-phosphate (DK-MTP-1-P). This Stenotrophomonas maltophilia (strain K279a) protein is Methylthioribulose-1-phosphate dehydratase.